The chain runs to 389 residues: Phosphoglycerate kinase (389 aa).

Substrate is bound by residues 21–23 (DLN), Arg36, 59–62 (HLGR), Arg112, and Arg145. ATP contacts are provided by residues Lys196, Glu318, and 344 to 347 (GGDS).

The protein belongs to the phosphoglycerate kinase family. In terms of assembly, monomer.

It localises to the cytoplasm. It carries out the reaction (2R)-3-phosphoglycerate + ATP = (2R)-3-phospho-glyceroyl phosphate + ADP. The protein operates within carbohydrate degradation; glycolysis; pyruvate from D-glyceraldehyde 3-phosphate: step 2/5. The chain is Phosphoglycerate kinase from Desulfovibrio desulfuricans (strain ATCC 27774 / DSM 6949 / MB).